We begin with the raw amino-acid sequence, 483 residues long: Arginine/agmatine antiporter (483 aa).

12 helical membrane-spanning segments follow: residues 11–31 (ILGT…GGIF), 41–61 (ASAG…FFIA), 85–105 (GFGP…QIFG), 124–144 (YFAG…IWIF), 157–177 (FVNI…ILIT), 208–228 (STML…VISG), 239–259 (ATIL…LLPF), 289–309 (VLMN…WTIL), 336–356 (PSFS…LVYF), 364–384 (MLEI…LFLV), 415–435 (LWLI…LLAL), and 458–478 (EILK…LFSA).

It belongs to the amino acid-polyamine-organocation (APC) superfamily. Basic amino acid/polyamine antiporter (APA) (TC 2.A.3.2) family.

The protein resides in the cell inner membrane. Catalyzes the exchange of L-arginine for agmatine. The arginine uptake by the bacterium in the macrophage may be a virulence factor against the host innate immune response. The protein is Arginine/agmatine antiporter (aaxC) of Chlamydia trachomatis serovar A (strain ATCC VR-571B / DSM 19440 / HAR-13).